Consider the following 2063-residue polypeptide: Rho guanine nucleotide exchange factor 17 (2063 aa).

4 disordered regions span residues W22–S365, Y380–D466, L485–D581, and I602–R958. A compositionally biased stretch (low complexity) spans P65–R76. Basic and acidic residues predominate over residues R87 to D96. The span at P108–A122 shows a compositional bias: low complexity. 2 positions are modified to phosphoserine: S142 and S152. Over residues A225–S250 the composition is skewed to low complexity. S310 is subject to Phosphoserine. The span at L313–V323 shows a compositional bias: polar residues. 7 positions are modified to phosphoserine: S326, S332, S383, S387, S395, S410, and S420. A compositionally biased stretch (polar residues) spans R388–E397. A compositionally biased stretch (basic and acidic residues) spans A445–S456. Residues S461 and S546 each carry the phosphoserine modification. The span at S562–L573 shows a compositional bias: low complexity. S619 is subject to Phosphoserine. The span at L671 to H680 shows a compositional bias: polar residues. S696 carries the phosphoserine modification. 2 positions are modified to phosphothreonine: T699 and T702. Residue S735 is modified to Phosphoserine. Residues S754–P765 are compositionally biased toward polar residues. Over residues S827–E836 the composition is skewed to basic and acidic residues. At S914 the chain carries Phosphoserine. Over residues L917–R928 the composition is skewed to basic residues. A compositionally biased stretch (basic and acidic residues) spans S930–G939. A phosphoserine mark is found at S961 and S1002. Positions A1034–S1060 are disordered. The span at K1041–D1050 shows a compositional bias: basic and acidic residues. A DH domain is found at M1066 to G1254. Residue S1331 is modified to Phosphoserine. Disordered stretches follow at residues H1564–P1584, G1616–G1719, T1991–A2020, and F2036–T2055. Over residues P1568 to A1582 the composition is skewed to pro residues. Low complexity predominate over residues S1644–T1680. Basic and acidic residues predominate over residues P2004–W2013.

As to expression, highly expressed in the heart.

In terms of biological role, acts as a guanine nucleotide exchange factor (GEF) for RhoA GTPases. The polypeptide is Rho guanine nucleotide exchange factor 17 (ARHGEF17) (Homo sapiens (Human)).